A 141-amino-acid polypeptide reads, in one-letter code: Large ribosomal subunit protein uL11 (141 aa).

It belongs to the universal ribosomal protein uL11 family. In terms of assembly, part of the ribosomal stalk of the 50S ribosomal subunit. Interacts with L10 and the large rRNA to form the base of the stalk. L10 forms an elongated spine to which L12 dimers bind in a sequential fashion forming a multimeric L10(L12)X complex. In terms of processing, one or more lysine residues are methylated.

In terms of biological role, forms part of the ribosomal stalk which helps the ribosome interact with GTP-bound translation factors. The polypeptide is Large ribosomal subunit protein uL11 (Lacticaseibacillus casei (strain BL23) (Lactobacillus casei)).